The sequence spans 358 residues: Phospho-N-acetylmuramoyl-pentapeptide-transferase (358 aa).

The next 10 helical transmembrane spans lie at Phe-24 to Val-44, Thr-73 to Leu-93, Asn-95 to Asp-115, Met-134 to Phe-154, Glu-169 to Val-189, Gly-197 to Ala-217, Gly-233 to Trp-253, Val-261 to Leu-281, Ile-286 to Val-306, and Lys-335 to Leu-355.

The protein belongs to the glycosyltransferase 4 family. MraY subfamily. The cofactor is Mg(2+).

The protein localises to the cell inner membrane. It catalyses the reaction UDP-N-acetyl-alpha-D-muramoyl-L-alanyl-gamma-D-glutamyl-meso-2,6-diaminopimeloyl-D-alanyl-D-alanine + di-trans,octa-cis-undecaprenyl phosphate = di-trans,octa-cis-undecaprenyl diphospho-N-acetyl-alpha-D-muramoyl-L-alanyl-D-glutamyl-meso-2,6-diaminopimeloyl-D-alanyl-D-alanine + UMP. Its pathway is cell wall biogenesis; peptidoglycan biosynthesis. In terms of biological role, catalyzes the initial step of the lipid cycle reactions in the biosynthesis of the cell wall peptidoglycan: transfers peptidoglycan precursor phospho-MurNAc-pentapeptide from UDP-MurNAc-pentapeptide onto the lipid carrier undecaprenyl phosphate, yielding undecaprenyl-pyrophosphoryl-MurNAc-pentapeptide, known as lipid I. This is Phospho-N-acetylmuramoyl-pentapeptide-transferase from Citrifermentans bemidjiense (strain ATCC BAA-1014 / DSM 16622 / JCM 12645 / Bem) (Geobacter bemidjiensis).